A 510-amino-acid polypeptide reads, in one-letter code: MALRILITVSLVLFSLSHTSFGYSPEEVKSWCGKTPNPQPCEYFLTQKTDVTSIKQDTDFYKISLQLALERATTAQSRTYTLGSKCRNEREKAAWEDCRELYELTVLKLNQTSNSSPGCTKVDKQTWLSTALTNLETCRASLEDLGVPEYVLPLLSNNVTKLISNTLSLNKVPYNEPSYKDGFPTWVKPGDRKLLQTTPRANIVVAQDGSGNVKTIQEAVAAASRAGGSRYVIYIKAGTYNENIEVKLKNIMFVGDGIGKTIITGSKSVGGGATTFKSATVAVVGDNFIARDITIRNTAGPNNHQAVALRSGSDLSVFYRCSFEGYQDTLYVHSQRQFYRECDIYGTVDFIFGNAAVVLQNCNIFARKPPNRTNTLTAQGRTDPNQSTGIIIHNCRVTAASDLKPVQSSVKTFLGRPWKQYSRTVYIKTFLDSLINPAGWMEWSGDFALNTLYYAEYMNTGPGSSTANRVKWRGYHVLTSPSQVSQFTVGNFIAGNSWLPATNVPFTSGL.

An N-terminal signal peptide occupies residues 1–19 (MALRILITVSLVLFSLSHT). N110 and N158 each carry an N-linked (GlcNAc...) asparagine glycan. The substrate site is built by T275 and Q305. Catalysis depends on D328, which acts as the Proton donor. C342 and C362 are oxidised to a cystine. The active-site Nucleophile is D349. N-linked (GlcNAc...) asparagine glycans are attached at residues N371 and N385. Substrate is bound by residues R416 and W418.

In the N-terminal section; belongs to the PMEI family. This sequence in the C-terminal section; belongs to the pectinesterase family. As to expression, expressed at low levels in young leaves, young bark, young fruit, mature fruit vesicles, shoots and flower buds, young bark and juice vesicles. In both leaf and fruit abscission zones, and mature leaves, expression was initially undetectable but increased markedly following ethylene treatment.

Its subcellular location is the secreted. The protein resides in the cell wall. The enzyme catalyses [(1-&gt;4)-alpha-D-galacturonosyl methyl ester](n) + n H2O = [(1-&gt;4)-alpha-D-galacturonosyl](n) + n methanol + n H(+). It functions in the pathway glycan metabolism; pectin degradation; 2-dehydro-3-deoxy-D-gluconate from pectin: step 1/5. In terms of biological role, acts in the modification of cell walls via demethylesterification of cell wall pectin. This is Pectinesterase 2 (PECS-2.1) from Citrus sinensis (Sweet orange).